The primary structure comprises 256 residues: 3-deoxy-manno-octulosonate cytidylyltransferase (256 aa).

Belongs to the KdsB family.

The protein resides in the cytoplasm. The catalysed reaction is 3-deoxy-alpha-D-manno-oct-2-ulosonate + CTP = CMP-3-deoxy-beta-D-manno-octulosonate + diphosphate. Its pathway is nucleotide-sugar biosynthesis; CMP-3-deoxy-D-manno-octulosonate biosynthesis; CMP-3-deoxy-D-manno-octulosonate from 3-deoxy-D-manno-octulosonate and CTP: step 1/1. It participates in bacterial outer membrane biogenesis; lipopolysaccharide biosynthesis. In terms of biological role, activates KDO (a required 8-carbon sugar) for incorporation into bacterial lipopolysaccharide in Gram-negative bacteria. This is 3-deoxy-manno-octulosonate cytidylyltransferase from Histophilus somni (strain 2336) (Haemophilus somnus).